A 274-amino-acid chain; its full sequence is NADPH-dependent 7-cyano-7-deazaguanine reductase (274 aa).

80 to 82 (VES) serves as a coordination point for substrate. Residue 82-83 (SK) coordinates NADPH. Catalysis depends on cysteine 181, which acts as the Thioimide intermediate. Catalysis depends on aspartate 188, which acts as the Proton donor. Residue 220-221 (HE) participates in substrate binding. Residue 249–250 (RG) coordinates NADPH.

This sequence belongs to the GTP cyclohydrolase I family. QueF type 2 subfamily. As to quaternary structure, homodimer.

It localises to the cytoplasm. It catalyses the reaction 7-aminomethyl-7-carbaguanine + 2 NADP(+) = 7-cyano-7-deazaguanine + 2 NADPH + 3 H(+). Its pathway is tRNA modification; tRNA-queuosine biosynthesis. Its function is as follows. Catalyzes the NADPH-dependent reduction of 7-cyano-7-deazaguanine (preQ0) to 7-aminomethyl-7-deazaguanine (preQ1). The protein is NADPH-dependent 7-cyano-7-deazaguanine reductase of Burkholderia pseudomallei (strain 1710b).